A 592-amino-acid chain; its full sequence is PiggyBac transposable element-derived protein 2 (592 aa).

Residues 31 to 69 (EEEESNNNREEIFIAPPDNAAGEFTDEDSGDEDSQRGAH) form a disordered region.

In Homo sapiens (Human), this protein is PiggyBac transposable element-derived protein 2 (PGBD2).